The following is a 315-amino-acid chain: Probable cell division protein kinase ECU11_1290 (315 aa).

A Protein kinase domain is found at 13-294 (YEKVCRISSG…ASQGLCSGFV (282 aa)). ATP contacts are provided by residues 19-27 (ISSGSFGNV) and lysine 42. Aspartate 138 functions as the Proton acceptor in the catalytic mechanism.

This sequence belongs to the protein kinase superfamily. CMGC Ser/Thr protein kinase family. CDC2/CDKX subfamily.

It is found in the nucleus. It carries out the reaction L-seryl-[protein] + ATP = O-phospho-L-seryl-[protein] + ADP + H(+). The catalysed reaction is L-threonyl-[protein] + ATP = O-phospho-L-threonyl-[protein] + ADP + H(+). Its function is as follows. May play a role in the control of the eukaryotic cell cycle. The sequence is that of Probable cell division protein kinase ECU11_1290 from Encephalitozoon cuniculi (strain GB-M1) (Microsporidian parasite).